The following is a 508-amino-acid chain: MTNTAPRELIRAIEHVPLTWWFLAVGGAWIVSKIIKILQTAYFSPLRKIPGPWYARLTSARLAWASFANNRIYYVQSLHDKYGSIVLIGPEEVDIADPVAAKQIHRMGSGFVKAPFYKLLSPGPVDNIFNFRDAKLHSTRRKLYAKGFTLNSLRQQWEPTIRNIVALTVERIRHDAQQGEAEILGWWTLMANETVCKLTFNGGHDTVRNGTKDPFVLMLERRMGDLAHLLQHFAPPLYYLGRLLGRAVPRLHDVFFSQETMFEAGKHVVAIARSARDAEGDRNLFVKALAAGDLESKIGGLNDTEIITDAGALLLAGSDPTALSLTYLIWCVLNRPKLQAELESEVAGLQGDITDAACADLPILNAVIYESLRLYGPAPGAMPRSPPPDGATLCGYYIPPSAVVVTQNWSLHGSPKVWKDPHTFDHTRWLPGSSLSEEAKISFNPFGQGARQCLGIHLGWMQLRLATALFFRRCPGAKLAPSTTPESMVMIDSFIAGMPKARRCAIQL.

Residues Leu-18–Leu-38 traverse the membrane as a helical segment. N-linked (GlcNAc...) asparagine glycosylation is found at Asn-192, Asn-209, Asn-302, and Asn-408. Cys-453 serves as a coordination point for heme.

This sequence belongs to the cytochrome P450 family. Heme is required as a cofactor.

The protein localises to the membrane. It functions in the pathway mycotoxin biosynthesis; aflatoxin biosynthesis. Cytochrome P450 monooxygenase; part of the gene cluster that mediates the biosynthesis of aflatoxins, a group of polyketide-derived furanocoumarins, and part of the most toxic and carcinogenic compounds among the known mycotoxins. The four major aflatoxins produced by A.parasiticus are aflatoxin B1 (AFB1), aflatoxin B2 (AFB2), aflatoxin G1 (AFG1) and aflatoxin G2 (AFG2). The role of the cytochrome P450 monooxygenase aflV in aflatoxin biosynthesis has still to be characterized. The biosynthesis of aflatoxins begins with the norsolorinic acid synthase aflC that combines a hexanoyl starter unit produced by the fatty acid synthase aflA/aflB and 7 malonyl-CoA extender units to synthesize the precursor NOR. The second step is the conversion of NOR to averantin and requires the norsolorinic acid ketoreductase aflD, which catalyzes the dehydration of norsolorinic acid to form (1'S)-averantin. The norsolorinic acid reductases aflE and aflF may also play a role in the conversion of NOR to AVN. The cytochrome P450 monooxygenase aflG then catalyzes the hydroxylation of AVN to 5'hydroxyaverantin (HAVN). The next step is performed by the 5'-hydroxyaverantin dehydrogenase aflH that transforms HAVN to 5'-oxoaverantin (OAVN) which is further converted to averufin (AVF) by aflK that plays a dual role in the pathway, as a 5'-oxoaverantin cyclase that mediates conversion of 5'-oxoaverantin, as well as a versicolorin B synthase in a later step in the pathway. The averufin oxidase aflI catalyzes the conversion of AVF to versiconal hemiacetal acetate (VHA). VHA is then the substrate for the versiconal hemiacetal acetate esterase aflJ to yield versiconal (VAL). Versicolorin B synthase aflK then converts VAL to versicolorin B (VERB) by closing the bisfuran ring of aflatoxin which is required for DNA-binding, thus giving to aflatoxin its activity as a mutagen. Then, the activity of the versicolorin B desaturase aflL leads to versicolorin A (VERA). A branch point starts from VERB since it can also be converted to dihydrodemethylsterigmatocystin (DMDHST), probably also by aflL, VERA being a precursor for aflatoxins B1 and G1, and DMDHST for aflatoxins B2 and G2. Next, the versicolorin reductase aflM and the cytochrome P450 monooxygenase aflN are involved in conversion of VERA to demethylsterigmatocystin (DMST). AflX and aflY seem also involved in this step, through probable aflX-mediated epoxide ring-opening step following versicolorin A oxidation and aflY-mediated Baeyer-Villiger oxidation required for the formation of the xanthone ring. The methyltransferase aflO then leads to the modification of DMST to sterigmatocystin (ST), and of DMDHST to dihydrosterigmatocystin (DHST). Both ST and DHST are then substrates of the O-methyltransferase aflP to yield O-methylsterigmatocystin (OMST) and dihydro-O-methylsterigmatocystin (DHOMST), respectively. Finally OMST is converted to aflatoxins B1 and G1, and DHOMST to aflatoxins B2 and G2, via the action of several enzymes including O-methylsterigmatocystin oxidoreductase aflQ, the cytochrome P450 monooxygenase aflU, but also the NADH-dependent flavin oxidoreductase nadA which is specifically required for the synthesis of AFG1. This Aspergillus parasiticus (strain ATCC 56775 / NRRL 5862 / SRRC 143 / SU-1) protein is Cytochrome P450 monooxygenase aflV.